We begin with the raw amino-acid sequence, 545 residues long: Chaperonin GroEL (545 aa).

ATP is bound by residues 29–32, Lys50, 86–90, Gly413, and Asp495; these read TLGP and DGTTT.

This sequence belongs to the chaperonin (HSP60) family. As to quaternary structure, forms a cylinder of 14 subunits composed of two heptameric rings stacked back-to-back. Interacts with the co-chaperonin GroES.

The protein localises to the cytoplasm. It catalyses the reaction ATP + H2O + a folded polypeptide = ADP + phosphate + an unfolded polypeptide.. In terms of biological role, together with its co-chaperonin GroES, plays an essential role in assisting protein folding. The GroEL-GroES system forms a nano-cage that allows encapsulation of the non-native substrate proteins and provides a physical environment optimized to promote and accelerate protein folding. The polypeptide is Chaperonin GroEL (Borrelia garinii subsp. bavariensis (strain ATCC BAA-2496 / DSM 23469 / PBi) (Borreliella bavariensis)).